We begin with the raw amino-acid sequence, 321 residues long: Solute carrier family 25 member 33 (321 aa).

Solcar repeat units lie at residues 9-118, 126-213, and 231-315; these read ENTL…AKEQ, NSNI…LKKY, and TNFF…IVYL. Transmembrane regions (helical) follow at residues 12 to 32, 49 to 65, 121 to 141, 190 to 210, 233 to 253, and 298 to 318; these read LLHL…TCPL, VYYP…AGVV, GVFV…AAFV, LTAS…YESL, FFGL…VAYP, and QIPN…LLED.

It belongs to the mitochondrial carrier (TC 2.A.29) family.

The protein resides in the mitochondrion inner membrane. The enzyme catalyses UTP(in) + UDP(out) = UTP(out) + UDP(in). It carries out the reaction dUTP(out) + UTP(in) = dUTP(in) + UTP(out). The catalysed reaction is 5-methyl-UTP(out) + UTP(in) = 5-methyl-UTP(in) + UTP(out). It catalyses the reaction 5-methyl-UDP(out) + UTP(in) = 5-methyl-UDP(in) + UTP(out). The enzyme catalyses UTP(in) + CTP(out) = UTP(out) + CTP(in). It carries out the reaction CDP(out) + UTP(in) = CDP(in) + UTP(out). The catalysed reaction is dCTP(out) + UTP(in) = dCTP(in) + UTP(out). It catalyses the reaction dCDP(out) + UTP(in) = dCDP(in) + UTP(out). The enzyme catalyses UTP(in) + GTP(out) = UTP(out) + GTP(in). It carries out the reaction UTP(in) + GDP(out) = UTP(out) + GDP(in). The catalysed reaction is dGTP(out) + UTP(in) = dGTP(in) + UTP(out). It catalyses the reaction dGDP(out) + UTP(in) = dGDP(in) + UTP(out). The enzyme catalyses ITP(out) + UTP(in) = ITP(in) + UTP(out). Functionally, mitochondrial transporter that imports/exports pyrimidine nucleotides into and from mitochondria. Selectively transports uridine, thymidine, guanosine, cytosine and inosine (deoxy)nucleoside di- and triphosphates by an antiport mechanism. May import (deoxy)nucleoside triphosphates in exchange for intramitochondrial (deoxy)nucleoside diphosphates, thus providing precursors necessary for de novo synthesis of mitochondrial DNA and RNA while exporting products of their catabolism. Participates in mitochondrial genome maintenance, regulation of mitochondrial membrane potential and mitochondrial respiration. Upon INS or IGF1 stimulation regulates cell growth and proliferation by controlling mitochondrial DNA replication and transcription, the ratio of mitochondria-to nuclear-encoded components of the electron transport chain resulting in control of mitochondrial ROS production. Participates in dendritic cell endocytosis and may associate with mitochondrial oxidative phosphorylation. This is Solute carrier family 25 member 33 (SLC25A33) from Bos taurus (Bovine).